Reading from the N-terminus, the 460-residue chain is 7-cyano-7-deazaguanine synthase 2 (460 aa).

The active-site For GATase activity is Cys-2. The Glutamine amidotransferase type-2 domain occupies Cys-2–Asn-225. Residue Ala-245–Ala-255 participates in ATP binding. The Zn(2+) site is built by Cys-426, Cys-434, Cys-437, and Cys-440.

It belongs to the QueC family. Zn(2+) serves as cofactor.

The catalysed reaction is 7-carboxy-7-deazaguanine + NH4(+) + ATP = 7-cyano-7-deazaguanine + ADP + phosphate + H2O + H(+). It functions in the pathway purine metabolism; 7-cyano-7-deazaguanine biosynthesis. Functionally, catalyzes the ATP-dependent conversion of 7-carboxy-7-deazaguanine (CDG) to 7-cyano-7-deazaguanine (preQ(0)). This chain is 7-cyano-7-deazaguanine synthase 2 (queC2), found in Sulfurisphaera tokodaii (strain DSM 16993 / JCM 10545 / NBRC 100140 / 7) (Sulfolobus tokodaii).